A 453-amino-acid chain; its full sequence is Acyl-coenzyme A thioesterase 2, mitochondrial (453 aa).

The transit peptide at M1–T42 directs the protein to the mitochondrion. An N6-acetyllysine modification is found at K83. Catalysis depends on charge relay system residues S273, D365, and H399. N6-succinyllysine is present on K447.

It belongs to the C/M/P thioester hydrolase family. In terms of assembly, monomer. The N-terminus is blocked. As to expression, constitutively expressed in heart and brown fat. Strongly induced in liver, and weakly in kidney, in peroxisome proliferator treated rat.

The protein localises to the mitochondrion matrix. The catalysed reaction is hexadecanoyl-CoA + H2O = hexadecanoate + CoA + H(+). It catalyses the reaction tetradecanoyl-CoA + H2O = tetradecanoate + CoA + H(+). It carries out the reaction octadecanoyl-CoA + H2O = octadecanoate + CoA + H(+). The enzyme catalyses eicosanoyl-CoA + H2O = eicosanoate + CoA + H(+). The catalysed reaction is decanoyl-CoA + H2O = decanoate + CoA + H(+). It catalyses the reaction dodecanoyl-CoA + H2O = dodecanoate + CoA + H(+). It carries out the reaction (9Z)-octadecenoyl-CoA + H2O = (9Z)-octadecenoate + CoA + H(+). The enzyme catalyses (9Z)-hexadecenoyl-CoA + H2O = (9Z)-hexadecenoate + CoA + H(+). The catalysed reaction is (9E)-octadecenoyl-CoA + H2O = (9E)-octadecenoate + CoA + H(+). It catalyses the reaction (9Z,12Z)-octadecadienoyl-CoA + H2O = (9Z,12Z)-octadecadienoate + CoA + H(+). It functions in the pathway lipid metabolism; fatty acid metabolism. In terms of biological role, catalyzes the hydrolysis of acyl-CoAs into free fatty acids and coenzyme A (CoASH), regulating their respective intracellular levels. Displays higher activity toward long chain acyl CoAs (C14-C20). The enzyme is involved in enhancing the hepatic fatty acid oxidation in mitochondria. In Rattus norvegicus (Rat), this protein is Acyl-coenzyme A thioesterase 2, mitochondrial (Acot2).